The sequence spans 474 residues: Ribosomal RNA small subunit methyltransferase F (474 aa).

Residues 121–127 (ASAPGSK), E145, D172, and D190 contribute to the S-adenosyl-L-methionine site. C243 acts as the Nucleophile in catalysis.

It belongs to the class I-like SAM-binding methyltransferase superfamily. RsmB/NOP family.

It localises to the cytoplasm. It catalyses the reaction cytidine(1407) in 16S rRNA + S-adenosyl-L-methionine = 5-methylcytidine(1407) in 16S rRNA + S-adenosyl-L-homocysteine + H(+). In terms of biological role, specifically methylates the cytosine at position 1407 (m5C1407) of 16S rRNA. This chain is Ribosomal RNA small subunit methyltransferase F, found in Shewanella piezotolerans (strain WP3 / JCM 13877).